The chain runs to 603 residues: Extracellular basic protease (603 aa).

The first 21 residues, methionine 1–alanine 21, serve as a signal peptide directing secretion. Positions glycine 22–lysine 132 are excised as a propeptide. The region spanning glutamine 143–valine 468 is the Peptidase S8 domain. Aspartate 173 acts as the Charge relay system in catalysis. The disordered stretch occupies residues proline 197–cysteine 221. 2 disulfides stabilise this stretch: cysteine 221–cysteine 273 and cysteine 315–cysteine 352. Catalysis depends on histidine 237, which acts as the Charge relay system. Serine 409 functions as the Charge relay system in the catalytic mechanism. Residues arginine 477 to phenylalanine 603 constitute a propeptide that is removed on maturation. Residues alanine 478–phenylalanine 603 form the P/Homo B domain.

The protein belongs to the peptidase S8 family.

The protein resides in the secreted. The sequence is that of Extracellular basic protease (bprV) from Dichelobacter nodosus (Bacteroides nodosus).